We begin with the raw amino-acid sequence, 434 residues long: ATP-dependent RNA helicase RhlB (434 aa).

The Q motif motif lies at 9–37 (QKFADLGLEPQVLDGLNAKGFINCTPIQA). A Helicase ATP-binding domain is found at 40–219 (LPVLLAGQDI…FEHMQEPEHV (180 aa)). An ATP-binding site is contributed by 53–60 (AQTGTGKT). Residues 165-168 (DEAD) carry the DEAD box motif. In terms of domain architecture, Helicase C-terminal spans 245–390 (ALLQTLIEEE…QSDYDTSALL (146 aa)). Residues 394 to 434 (PAPIRLQRRPPQNRRNGSNNGQRQSGNRKHSRPRPPRSPQA) form a disordered region. Over residues 406–418 (NRRNGSNNGQRQS) the composition is skewed to low complexity. Over residues 419–428 (GNRKHSRPRP) the composition is skewed to basic residues.

This sequence belongs to the DEAD box helicase family. RhlB subfamily. Component of the RNA degradosome, which is a multiprotein complex involved in RNA processing and mRNA degradation.

The protein localises to the cytoplasm. The enzyme catalyses ATP + H2O = ADP + phosphate + H(+). Its function is as follows. DEAD-box RNA helicase involved in RNA degradation. Has RNA-dependent ATPase activity and unwinds double-stranded RNA. The protein is ATP-dependent RNA helicase RhlB of Aliivibrio salmonicida (strain LFI1238) (Vibrio salmonicida (strain LFI1238)).